A 76-amino-acid chain; its full sequence is Sulfur carrier protein TusA (76 aa).

Cys14 serves as the catalytic Cysteine persulfide intermediate.

Belongs to the sulfur carrier protein TusA family. Interacts with IscS.

It localises to the cytoplasm. It participates in tRNA modification. Its function is as follows. Sulfur carrier protein involved in sulfur trafficking in the cell. Part of a sulfur-relay system required for 2-thiolation during synthesis of 2-thiouridine of the modified wobble base 5-methylaminomethyl-2-thiouridine (mnm(5)s(2)U) in tRNA. Interacts with IscS and stimulates its cysteine desulfurase activity. Accepts an activated sulfur from IscS, which is then transferred to TusD, and thus determines the direction of sulfur flow from IscS to 2-thiouridine formation. Also appears to be involved in sulfur transfer for the biosynthesis of molybdopterin. This chain is Sulfur carrier protein TusA, found in Buchnera aphidicola subsp. Acyrthosiphon pisum (strain 5A).